Consider the following 217-residue polypeptide: 3,4-dihydroxy-2-butanone 4-phosphate synthase (217 aa).

D-ribulose 5-phosphate-binding positions include 37-38, D42, 150-154, and E174; these read RE and RRGHT. E38 lines the Mg(2+) pocket. H153 contacts Mg(2+).

The protein belongs to the DHBP synthase family. In terms of assembly, homodimer. Mg(2+) is required as a cofactor. Requires Mn(2+) as cofactor.

It carries out the reaction D-ribulose 5-phosphate = (2S)-2-hydroxy-3-oxobutyl phosphate + formate + H(+). The protein operates within cofactor biosynthesis; riboflavin biosynthesis; 2-hydroxy-3-oxobutyl phosphate from D-ribulose 5-phosphate: step 1/1. Its function is as follows. Catalyzes the conversion of D-ribulose 5-phosphate to formate and 3,4-dihydroxy-2-butanone 4-phosphate. In Shewanella oneidensis (strain ATCC 700550 / JCM 31522 / CIP 106686 / LMG 19005 / NCIMB 14063 / MR-1), this protein is 3,4-dihydroxy-2-butanone 4-phosphate synthase.